We begin with the raw amino-acid sequence, 92 residues long: LYR motif-containing protein 4 homolog (92 aa).

The stretch at 40-68 (ANKAIRDFAEIDRQMEAGKQNLELIRRQV) forms a coiled coil.

This sequence belongs to the complex I LYR family. Component of the mitochondrial core iron-sulfur cluster (ISC) assembly complex at least composed of the cysteine desulfurase Nfs1, the scaffold protein IscU, the accessory protein bcn92/Isd11/Lyrm4, and probably fh/frataxin. Interacts with Nfs1.

It localises to the mitochondrion. Functionally, stabilizing factor of the core iron-sulfur cluster (ISC) assembly complex that regulates the stability and cysteine desulfurase activity of Nfs1 and participates in the [2Fe-2S] clusters assembly on the scaffolding protein IscU. The chain is LYR motif-containing protein 4 homolog from Drosophila subobscura (Fruit fly).